Consider the following 206-residue polypeptide: Small ribosomal subunit protein eS1 (206 aa).

The protein belongs to the eukaryotic ribosomal protein eS1 family.

This is Small ribosomal subunit protein eS1 from Halobacterium salinarum (strain ATCC 29341 / DSM 671 / R1).